The chain runs to 93 residues: Acyl carrier protein AcpXL (93 aa).

The region spanning 2 to 88 is the Carrier domain; that stretch reads STTFDKVAKI…NLCAKIDALV (87 aa). Residue serine 37 is modified to O-(pantetheine 4'-phosphoryl)serine.

Post-translationally, 4'-phosphopantetheine is transferred from CoA to a specific serine of apo-ACP by AcpS. This modification is essential for activity because fatty acids are bound in thioester linkage to the sulfhydryl of the prosthetic group.

It is found in the cytoplasm. It participates in glycolipid biosynthesis; KDO(2)-lipid A biosynthesis. Its function is as follows. Carrier of the growing fatty acid chain in fatty acid biosynthesis. Is involved in the transfer of long hydroxylated fatty acids to lipid A. In Mesorhizobium japonicum (strain LMG 29417 / CECT 9101 / MAFF 303099) (Mesorhizobium loti (strain MAFF 303099)), this protein is Acyl carrier protein AcpXL (acpXL).